We begin with the raw amino-acid sequence, 696 residues long: SEC14 domain and spectrin repeat-containing protein 1 (696 aa).

Positions 1–153 (MDATVILPIL…EFGGSLTYDH (153 aa)) constitute a CRAL-TRIO domain. 3 Spectrin repeats span residues 272–378 (TQLD…NLLQ), 381–494 (LDFH…LKML), and 500–602 (FKCE…HRLE).

This sequence belongs to the SOLO family.

Its function is as follows. May act as the primary docking protein directing membrane turnover and assembly of the transient receptor potential channels trpc4 and trpc5. Binds phospholipids. The polypeptide is SEC14 domain and spectrin repeat-containing protein 1 (sestd1) (Xenopus tropicalis (Western clawed frog)).